Reading from the N-terminus, the 354-residue chain is Uroporphyrinogen decarboxylase (354 aa).

Residues 27–31 (RQAGR), Asp-77, Tyr-154, Thr-209, and His-327 each bind substrate.

This sequence belongs to the uroporphyrinogen decarboxylase family. As to quaternary structure, homodimer.

The protein localises to the cytoplasm. It catalyses the reaction uroporphyrinogen III + 4 H(+) = coproporphyrinogen III + 4 CO2. The protein operates within porphyrin-containing compound metabolism; protoporphyrin-IX biosynthesis; coproporphyrinogen-III from 5-aminolevulinate: step 4/4. In terms of biological role, catalyzes the decarboxylation of four acetate groups of uroporphyrinogen-III to yield coproporphyrinogen-III. The chain is Uroporphyrinogen decarboxylase from Hydrogenovibrio crunogenus (strain DSM 25203 / XCL-2) (Thiomicrospira crunogena).